The chain runs to 384 residues: 8-amino-7-oxononanoate synthase (384 aa).

R21 serves as a coordination point for substrate. 108 to 109 (GF) contacts pyridoxal 5'-phosphate. A substrate-binding site is contributed by H133. Pyridoxal 5'-phosphate contacts are provided by S179, H207, and T233. N6-(pyridoxal phosphate)lysine is present on K236. Residue T352 participates in substrate binding.

Belongs to the class-II pyridoxal-phosphate-dependent aminotransferase family. BioF subfamily. In terms of assembly, homodimer. It depends on pyridoxal 5'-phosphate as a cofactor.

The enzyme catalyses 6-carboxyhexanoyl-[ACP] + L-alanine + H(+) = (8S)-8-amino-7-oxononanoate + holo-[ACP] + CO2. Its pathway is cofactor biosynthesis; biotin biosynthesis. Its function is as follows. Catalyzes the decarboxylative condensation of pimeloyl-[acyl-carrier protein] and L-alanine to produce 8-amino-7-oxononanoate (AON), [acyl-carrier protein], and carbon dioxide. This chain is 8-amino-7-oxononanoate synthase, found in Escherichia coli (strain SE11).